A 444-amino-acid polypeptide reads, in one-letter code: Chitinase-like protein Idgf5 (444 aa).

Positions 1–26 (MMWIQKNPFLGLLLCSFLAFFQSTYA) are cleaved as a signal peptide. The 416-residue stretch at 29-444 (GKLVCFYDAQ…PILRSIKFKL (416 aa)) folds into the GH18 domain. Cys-33 and Cys-60 form a disulfide bridge. Residues Asn-289 and Asn-311 are each glycosylated (N-linked (GlcNAc...) asparagine). Cysteines 349 and 429 form a disulfide.

The protein belongs to the glycosyl hydrolase 18 family. IDGF subfamily. Post-translationally, glycosylated.

It localises to the secreted. Its function is as follows. Probably required to stimulate the proliferation, polarization and motility of imaginal disk cells. May act by stabilizing the binding of insulin-like peptides to its receptor through a simultaneous interaction with both molecules to form a multiprotein signaling complex. This chain is Chitinase-like protein Idgf5 (Idgf5), found in Drosophila melanogaster (Fruit fly).